We begin with the raw amino-acid sequence, 504 residues long: MFSKKSYDGPPAGYGPPTGYGAPTADYGYGSPPPGSYYVDDAPQLFYKWTSPPGAVRGLQAGVLVLCIAIFACVASTLAWDYGYGLGGAYGTGLGGFYGSNYYGSGLSYSYGYGGYYGGVNQRTANGFMIAMAVLCFLAQLGLLVAALSKSGATRSRRFYLAVLVLSAVLAFVMLIASIVYIMGVNPQAQMSSGYYYSPLLAMCSQAYGSTYLNQYIYHYCTVDPQEAVAAVCGFLIVILLCLICFFAQKTRSKIWRYGKANIYWDRAPVVQEGPDVEEWVKNVADGASVQDETATLAYSEKPTSPVAAPPYSYVPPPSAGYYPSGTYSSRGDQPDRALSASPVHGEEEEEKGKDQPSRPPARRGRRRRRNPELDESQYETDYTTAVESSDERDQEQWASLYPPITSDGARQRYKQEFDTDLKRYKQLCAEMDSINDRLNQLSRRLDSITEDSPQYQDVAEEYNQLKDLKRSPDYQSKKQESKVLRNKLFHIKRMVSAYDKVRG.

Topologically, residues 1–57 (MFSKKSYDGPPAGYGPPTGYGAPTADYGYGSPPPGSYYVDDAPQLFYKWTSPPGAVR) are cytoplasmic. An MARVEL domain is found at 51–253 (SPPGAVRGLQ…ICFFAQKTRS (203 aa)). A helical membrane pass occupies residues 58–80 (GLQAGVLVLCIAIFACVASTLAW). Residues 81–123 (DYGYGLGGAYGTGLGGFYGSNYYGSGLSYSYGYGGYYGGVNQR) lie on the Extracellular side of the membrane. The chain crosses the membrane as a helical span at residues 124–148 (TANGFMIAMAVLCFLAQLGLLVAAL). At 149–158 (SKSGATRSRR) the chain is on the cytoplasmic side. Residues 159–183 (FYLAVLVLSAVLAFVMLIASIVYIM) traverse the membrane as a helical segment. Residues 184–227 (GVNPQAQMSSGYYYSPLLAMCSQAYGSTYLNQYIYHYCTVDPQE) lie on the Extracellular side of the membrane. A disulfide bond links C204 and C221. A helical membrane pass occupies residues 228-249 (AVAAVCGFLIVILLCLICFFAQ). Topologically, residues 250 to 504 (KTRSKIWRYG…MVSAYDKVRG (255 aa)) are cytoplasmic. The disordered stretch occupies residues 324 to 396 (PSGTYSSRGD…VESSDERDQE (73 aa)). Positions 361–370 (PARRGRRRRR) are enriched in basic residues. Phosphotyrosine is present on residues Y379 and Y383. The tract at residues 379–385 (YETDYTT) is interaction with TJP1. An OCEL domain is found at 396 to 504 (EQWASLYPPI…MVSAYDKVRG (109 aa)). A coiled-coil region spans residues 412 to 471 (QRYKQEFDTDLKRYKQLCAEMDSINDRLNQLSRRLDSITEDSPQYQDVAEEYNQLKDLKR).

It belongs to the ELL/occludin family. As to quaternary structure, interacts with TJP1 and TJP3. In terms of processing, phosphorylated. Localized at tight junctions of both epithelial and endothelial cells. Highly expressed in lung and liver. Expressed at a lower level in brain.

It is found in the cell membrane. Its subcellular location is the cell junction. The protein resides in the tight junction. Its function is as follows. May play a role in the formation and regulation of the tight junction (TJ) paracellular permeability barrier. Interacts with ZO-1. This is Occludin (OCLN) from Gallus gallus (Chicken).